We begin with the raw amino-acid sequence, 535 residues long: MRHFTYHSDVVVWQYIFESGAATNYITRGRALKKLQLSLKDFRRLCILKGVYPHEPLHKKKVNKGSTENRVYYYAKDINFLASEPIIRKFREYKIFLRKLTTAKAKRDEERIKTLYENRPEYQLDHIVKERYPTFESALRDLDDALCLLFAFAVLPHTKIITSSLVASSRRLTAEFNHYIIESNSLNKVFVSIKGIYYEAEVMGERVTWIVGHDRGMGHVSEVDFSVMATFAEFYVTMLEFVNFRLYQSVGLFYPPKLAFKSDKLEDDDQAEEGRVYSLACPLSKFENYEEQIDASIGDEVDNVLNEKLCDVEKRKQLFANYRFWLNREVPKDVLAIIIRSCGGLVSWENCPAAQYYENDAQITHQIVDRPLLDSHKNISRCYVQPQWVFDSFNRRSCLSIKKYLPGAILPPHLSPFSSDYDTYEEQLNQLRLLSKASANVTNRMETEAENKVQERKKIQKEKEVPIINVNKGRMHKENLQKKLNEKGHELKLREMLIPKKRRRVYSKIKRGIKRRVHEEKKLNEKRLKMLKAAD.

The BRCT domain maps to 314–406; it reads KRKQLFANYR…SCLSIKKYLP (93 aa).

Belongs to the pescadillo family.

The protein localises to the nucleus. Its subcellular location is the nucleolus. The protein resides in the nucleoplasm. In terms of biological role, required for maturation of ribosomal RNAs and formation of the large ribosomal subunit. This chain is Pescadillo homolog, found in Brugia malayi (Filarial nematode worm).